The sequence spans 132 residues: Small ribosomal subunit protein uS8 (132 aa).

It belongs to the universal ribosomal protein uS8 family. Part of the 30S ribosomal subunit. Contacts proteins S5 and S12.

Functionally, one of the primary rRNA binding proteins, it binds directly to 16S rRNA central domain where it helps coordinate assembly of the platform of the 30S subunit. This chain is Small ribosomal subunit protein uS8, found in Mycoplasmopsis synoviae (strain 53) (Mycoplasma synoviae).